The chain runs to 210 residues: Peptidyl-tRNA hydrolase (210 aa).

TRNA is bound at residue Tyr30. His35 serves as the catalytic Proton acceptor. TRNA is bound by residues Tyr81, Asn83, and Asn129.

The protein belongs to the PTH family. As to quaternary structure, monomer.

The protein resides in the cytoplasm. The catalysed reaction is an N-acyl-L-alpha-aminoacyl-tRNA + H2O = an N-acyl-L-amino acid + a tRNA + H(+). Functionally, hydrolyzes ribosome-free peptidyl-tRNAs (with 1 or more amino acids incorporated), which drop off the ribosome during protein synthesis, or as a result of ribosome stalling. Catalyzes the release of premature peptidyl moieties from peptidyl-tRNA molecules trapped in stalled 50S ribosomal subunits, and thus maintains levels of free tRNAs and 50S ribosomes. The polypeptide is Peptidyl-tRNA hydrolase (Bordetella petrii (strain ATCC BAA-461 / DSM 12804 / CCUG 43448)).